We begin with the raw amino-acid sequence, 343 residues long: Anthranilate phosphoribosyltransferase (343 aa).

Residues Gly-84, 87 to 88 (GD), Thr-92, 94 to 97 (NIST), 112 to 120 (KHGNRSASS), and Ser-124 contribute to the 5-phospho-alpha-D-ribose 1-diphosphate site. Gly-84 is a binding site for anthranilate. Ser-96 is a Mg(2+) binding site. Position 115 (Asn-115) interacts with anthranilate. Residue Arg-170 participates in anthranilate binding. Residues Asp-229 and Glu-230 each coordinate Mg(2+).

Belongs to the anthranilate phosphoribosyltransferase family. As to quaternary structure, homodimer. Mg(2+) serves as cofactor.

The catalysed reaction is N-(5-phospho-beta-D-ribosyl)anthranilate + diphosphate = 5-phospho-alpha-D-ribose 1-diphosphate + anthranilate. It functions in the pathway amino-acid biosynthesis; L-tryptophan biosynthesis; L-tryptophan from chorismate: step 2/5. Functionally, catalyzes the transfer of the phosphoribosyl group of 5-phosphorylribose-1-pyrophosphate (PRPP) to anthranilate to yield N-(5'-phosphoribosyl)-anthranilate (PRA). This is Anthranilate phosphoribosyltransferase from Bordetella pertussis (strain Tohama I / ATCC BAA-589 / NCTC 13251).